The chain runs to 243 residues: UPF0758 protein MAE_44350 (243 aa).

One can recognise an MPN domain in the interval 113 to 235; the sequence is VIDSPDTAAA…FQSLRQITDL (123 aa). Zn(2+) contacts are provided by H184, H186, and D197. The short motif at 184-197 is the JAMM motif element; it reads HNHPTGSLVPSQDD.

The protein belongs to the UPF0758 family.

This Microcystis aeruginosa (strain NIES-843 / IAM M-2473) protein is UPF0758 protein MAE_44350.